Reading from the N-terminus, the 362-residue chain is Putative sphingolipid delta(4)-desaturase/C4-monooxygenase (362 aa).

Helical transmembrane passes span Tyr-45–Leu-61, Leu-71–Ile-91, and Phe-107–Tyr-127. The Histidine box-1 motif lies at His-89–His-93. The Histidine box-2 motif lies at His-128 to His-132. 2 helical membrane passes run Leu-160–Ile-177 and Leu-198–Ile-218. The short motif at His-259–His-263 is the Histidine box-3 element.

The protein belongs to the fatty acid desaturase type 1 family. DEGS subfamily.

Its subcellular location is the membrane. It catalyses the reaction an N-acyl-15-methylhexadecasphinganine + 2 Fe(II)-[cytochrome b5] + O2 + 2 H(+) = an N-acyl-4-hydroxy-15-methylhexadecasphinganine + 2 Fe(III)-[cytochrome b5] + H2O. It carries out the reaction an N-acyl-15-methylhexadecasphinganine + 2 Fe(II)-[cytochrome b5] + O2 + 2 H(+) = an N-acyl-15-methylhexadecasphing-4-enine + 2 Fe(III)-[cytochrome b5] + 2 H2O. The catalysed reaction is a dihydroceramide + 2 Fe(II)-[cytochrome b5] + O2 + 2 H(+) = a phytoceramide + 2 Fe(III)-[cytochrome b5] + H2O. The enzyme catalyses an N-acylsphinganine + 2 Fe(II)-[cytochrome b5] + O2 + 2 H(+) = an N-acylsphing-4-enine + 2 Fe(III)-[cytochrome b5] + 2 H2O. It catalyses the reaction N-octanoylsphinganine + 2 Fe(II)-[cytochrome b5] + O2 + 2 H(+) = N-octanoyl-4-hydroxysphinganine + 2 Fe(III)-[cytochrome b5] + H2O. It carries out the reaction an N-acylsphinganine + 2 Fe(II)-[cytochrome b5] + O2 + 2 H(+) = an N-acyl-(4R)-4-hydroxysphinganine + 2 Fe(III)-[cytochrome b5] + H2O. The protein operates within lipid metabolism; sphingolipid metabolism. Its function is as follows. Bifunctional enzyme which acts both as a sphingolipid delta(4)-desaturase and a sphingolipid C4-monooxygenase. C.elegans contain specific sphingoid bases, which are unique or different in structure compared to the sphingoid bases found in other animals. Two examples of these distinctive compounds are: 15-methylhexadecasphinganine and 15-methylhexadecasphing-4-enine and this enzyme can catalyze their conversion. The polypeptide is Putative sphingolipid delta(4)-desaturase/C4-monooxygenase (ttm-5) (Caenorhabditis elegans).